Consider the following 116-residue polypeptide: MCDQTKHSKCCPAKGNQCCPPQQNQCCQSKGNQCCPPKQNQCCQPKGSQCCPPKHNHCCQPKPPCCIQARCCGLETKPEVSPLNMESEPNSPQTQDKGCQTQQQPHSPQNESRPSK.

7 consecutive repeat copies span residues 6 to 13 (KHSKCCPA), 14 to 21 (KGNQCCPP), 30 to 37 (KGNQCCPP), 38 to 45 (KQNQCCQP), 46 to 53 (KGSQCCPP), 54 to 61 (KHNHCCQP), and 62 to 68 (KPPCCIQ). The 7 X 7 (OR 8) AA approximate repeats stretch occupies residues 6–68 (KHSKCCPAKG…CQPKPPCCIQ (63 aa)). The disordered stretch occupies residues 80-116 (VSPLNMESEPNSPQTQDKGCQTQQQPHSPQNESRPSK). Residues 93 to 104 (QTQDKGCQTQQQ) are compositionally biased toward low complexity. The span at 105-116 (PHSPQNESRPSK) shows a compositional bias: polar residues.

Testis. Is selectively expressed in the spermatids of seminiferous tubules.

It is found in the cytoplasm. The protein localises to the mitochondrion membrane. In terms of biological role, involved in sperm motility. Its absence is associated with genetic background dependent male infertility. Infertility may be due to reduced sperm motility in the female reproductive tract and inability to penetrate the oocyte zona pellucida. The protein is Sperm mitochondrial-associated cysteine-rich protein (SMCP) of Homo sapiens (Human).